Reading from the N-terminus, the 389-residue chain is snRNA-activating protein complex subunit 1 (389 aa).

The segment covering 1 to 15 has biased composition (low complexity); it reads MGTPAGAGTRPTGAG. Disordered stretches follow at residues 1-22, 245-276, and 290-389; these read MGTP…GVGI, WHKE…ERCE, and SAVV…KRKC. Positions 20 to 187 are SNAPC3-binding; sequence VGIPPGLQTD…QKFKDPNDRV (168 aa). The tract at residues 183–287 is SNAPC4-binding; that stretch reads PNDRVMKLIT…AVSLAKIKAK (105 aa). Residues 245–262 are compositionally biased toward basic and acidic residues; the sequence is WHKERKNPSLKPKLKDGE. Phosphoserine is present on residues Ser308 and Ser309.

As to quaternary structure, part of the SNAPc complex composed of 5 subunits: SNAPC1, SNAPC2, SNAPC3, SNAPC4 and SNAPC5. SNAPC1 interacts with SNAPC3, SNAPC4 and TBP.

Its subcellular location is the nucleus. In terms of biological role, part of the SNAPc complex required for the transcription of both RNA polymerase II and III small-nuclear RNA genes. Binds to the proximal sequence element (PSE), a non-TATA-box basal promoter element common to these 2 types of genes. Recruits TBP and BRF2 to the U6 snRNA TATA box. This Mus musculus (Mouse) protein is snRNA-activating protein complex subunit 1 (Snapc1).